Here is a 549-residue protein sequence, read N- to C-terminus: Cytoplasmic trehalase (549 aa).

Residues R168, 175–176 (WD), N212, 221–223 (RSQ), 292–294 (RDE), and G324 each bind substrate. Active-site proton donor/acceptor residues include D326 and E509. E525 contacts substrate.

It belongs to the glycosyl hydrolase 37 family. Monomer.

Its subcellular location is the cytoplasm. It carries out the reaction alpha,alpha-trehalose + H2O = alpha-D-glucose + beta-D-glucose. Its pathway is glycan degradation; trehalose degradation; D-glucose from alpha,alpha-trehalose: step 1/1. Functionally, hydrolyzes trehalose to glucose. Could be involved, in cells returning to low osmolarity conditions, in the utilization of the accumulated cytoplasmic trehalose, which was synthesized in response to high osmolarity. The protein is Cytoplasmic trehalase of Escherichia fergusonii (strain ATCC 35469 / DSM 13698 / CCUG 18766 / IAM 14443 / JCM 21226 / LMG 7866 / NBRC 102419 / NCTC 12128 / CDC 0568-73).